The sequence spans 334 residues: Biotin synthase (334 aa).

The Radical SAM core domain occupies 41-260; the sequence is TRLETASLLS…IAVARIMMPR (220 aa). [4Fe-4S] cluster contacts are provided by C56, C60, and C63. [2Fe-2S] cluster contacts are provided by C100, C131, C191, and R264.

It belongs to the radical SAM superfamily. Biotin synthase family. As to quaternary structure, homodimer. [4Fe-4S] cluster serves as cofactor. It depends on [2Fe-2S] cluster as a cofactor.

It catalyses the reaction (4R,5S)-dethiobiotin + (sulfur carrier)-SH + 2 reduced [2Fe-2S]-[ferredoxin] + 2 S-adenosyl-L-methionine = (sulfur carrier)-H + biotin + 2 5'-deoxyadenosine + 2 L-methionine + 2 oxidized [2Fe-2S]-[ferredoxin]. Its pathway is cofactor biosynthesis; biotin biosynthesis; biotin from 7,8-diaminononanoate: step 2/2. Catalyzes the conversion of dethiobiotin (DTB) to biotin by the insertion of a sulfur atom into dethiobiotin via a radical-based mechanism. The sequence is that of Biotin synthase from Bradyrhizobium sp. (strain ORS 278).